The chain runs to 49 residues: Small, acid-soluble spore protein O (49 aa).

The tract at residues 1–49 (MGKRKANHTISGMNAASAQGQGTGYNEEFANEPLTPAERQNNKKRKKNQ) is disordered. The segment covering 8–20 (HTISGMNAASAQG) has biased composition (polar residues).

This sequence belongs to the SspO family.

The protein localises to the spore core. This chain is Small, acid-soluble spore protein O, found in Bacillus cereus (strain B4264).